Reading from the N-terminus, the 324-residue chain is Zinc transporter ZIP1 (324 aa).

The Extracellular segment spans residues 1 to 30; it reads MGPWGEPELLVWRPEAAASEAPVPMGLEVK. The chain crosses the membrane as a helical span at residues 31 to 51; it reads LGALVLLLVLTLICSLVPVCV. Topologically, residues 52–68 are cytoplasmic; the sequence is LRRPGANPEASASRQKA. Residues 69–89 form a helical membrane-spanning segment; the sequence is LSLVSCFAGGVFLATCLLDLL. Over 90–104 the chain is Extracellular; it reads PDYLGAIDEALAALH. The chain crosses the membrane as a helical span at residues 105 to 125; that stretch reads VTLQFPLQEFILAMGFFLVLV. At 126 to 179 the chain is on the cytoplasmic side; that stretch reads MEQITLAYKEQSGPPPREETRALLGTVNGGPQHWHDGLGVPQAGGASSAPSALR. The chain crosses the membrane as a helical span at residues 180 to 200; the sequence is ACVLVFSLALHSVFEGLAVGL. The Extracellular segment spans residues 201-206; that stretch reads QRDQAR. Residues 207-227 form a helical membrane-spanning segment; that stretch reads AMELCLALLLHKGILAVSLSL. Residues 228–237 are Cytoplasmic-facing; sequence RLLQSHLRAQ. A helical membrane pass occupies residues 238-258; the sequence is VVAGCGILFSCMTPLGIGLGT. Topologically, residues 259–272 are extracellular; it reads ALAESAGPLHQLAQ. A helical transmembrane segment spans residues 273–293; it reads SVLEGMAAGTFLYITFLEILP. The Cytoplasmic segment spans residues 294 to 303; sequence QELATSEQRI. The helical transmembrane segment at 304-324 threads the bilayer; sequence LKVILLLAGFALLTGLLFIQI.

It belongs to the ZIP transporter (TC 2.A.5) family.

The protein resides in the cell membrane. Its subcellular location is the endoplasmic reticulum membrane. It catalyses the reaction Zn(2+)(in) = Zn(2+)(out). Its function is as follows. Transporter for the divalent cation Zn(2+). Mediates the influx of Zn(2+) into cells from extracellular space. The polypeptide is Zinc transporter ZIP1 (SLC39A1) (Bos taurus (Bovine)).